The chain runs to 329 residues: Ribosomal protein L11 methyltransferase (329 aa).

S-adenosyl-L-methionine contacts are provided by Thr177, Gly198, Asp220, and Asn264.

It belongs to the methyltransferase superfamily. PrmA family.

The protein resides in the cytoplasm. The catalysed reaction is L-lysyl-[protein] + 3 S-adenosyl-L-methionine = N(6),N(6),N(6)-trimethyl-L-lysyl-[protein] + 3 S-adenosyl-L-homocysteine + 3 H(+). In terms of biological role, methylates ribosomal protein L11. This is Ribosomal protein L11 methyltransferase from Helicobacter pylori (strain J99 / ATCC 700824) (Campylobacter pylori J99).